The chain runs to 243 residues: Probable transcriptional regulatory protein LCABL_11860 (243 aa).

The segment at 1 to 23 (MSGHSKWHNIQGRKNAQDSKRGK) is disordered.

Belongs to the TACO1 family.

Its subcellular location is the cytoplasm. The protein is Probable transcriptional regulatory protein LCABL_11860 of Lacticaseibacillus casei (strain BL23) (Lactobacillus casei).